The sequence spans 397 residues: Tetratricopeptide repeat protein 4 homolog (397 aa).

3 TPR repeats span residues 90 to 125, 130 to 163, and 164 to 197; these read AETF…KCND, SIYL…NPLN, and MKAY…EPTN.

The protein belongs to the TTC4 family.

The polypeptide is Tetratricopeptide repeat protein 4 homolog (ttc4) (Dictyostelium discoideum (Social amoeba)).